The chain runs to 86 residues: Small ribosomal subunit protein bS20 (86 aa).

The span at 1-11 (MANIKQQKKRN) shows a compositional bias: basic residues. Positions 1 to 21 (MANIKQQKKRNKTNEKRRLQN) are disordered.

The protein belongs to the bacterial ribosomal protein bS20 family.

In terms of biological role, binds directly to 16S ribosomal RNA. In Onion yellows phytoplasma (strain OY-M), this protein is Small ribosomal subunit protein bS20.